A 703-amino-acid polypeptide reads, in one-letter code: FERM domain-containing protein 7 (703 aa).

One can recognise an FERM domain in the interval 2–282; it reads LHLKVQFLDD…EYHAFFRLSE (281 aa). Residues 525-552 adopt a coiled-coil conformation; it reads RNMRIKSLQQDLQELQEAMARTSGRSNI.

In the developing cerebral cortex, strong expression is observed in the ventricular and intermediate zones at 13 and 17 dpc. At 17 dpc and P0, expression appears to be restricted to the cortical plate. In neonates, highly expressed in cortex, hippocampus, cerebellum, olfactory bulb and eye with little or no expression in liver, kidney, skeletal muscle or heart muscle (at protein level).

It is found in the cell projection. It localises to the neuron projection. Its subcellular location is the growth cone. In terms of biological role, plays a role in neurite development, may be through the activation of the GTPase RAC1. Plays a role in the control of eye movement and gaze stability. The protein is FERM domain-containing protein 7 of Mus musculus (Mouse).